We begin with the raw amino-acid sequence, 267 residues long: Pyridoxine/pyridoxamine 5'-phosphate oxidase (267 aa).

Residues Arg-20–Tyr-23 and Lys-80 each bind substrate. FMN-binding positions include Arg-75–Lys-80, Tyr-90–Thr-91, Arg-96, Lys-97, and Gln-119. Tyr-137, Arg-141, and Ser-145 together coordinate substrate. FMN-binding positions include Gln-154–Ser-155 and Trp-200. Residue Arg-206 to His-208 coordinates substrate. Position 210 (Arg-210) interacts with FMN.

Belongs to the pyridoxamine 5'-phosphate oxidase family. In terms of assembly, homodimer. The cofactor is FMN.

It carries out the reaction pyridoxamine 5'-phosphate + O2 + H2O = pyridoxal 5'-phosphate + H2O2 + NH4(+). The catalysed reaction is pyridoxine 5'-phosphate + O2 = pyridoxal 5'-phosphate + H2O2. The protein operates within cofactor metabolism; pyridoxal 5'-phosphate salvage; pyridoxal 5'-phosphate from pyridoxamine 5'-phosphate: step 1/1. It functions in the pathway cofactor metabolism; pyridoxal 5'-phosphate salvage; pyridoxal 5'-phosphate from pyridoxine 5'-phosphate: step 1/1. In terms of biological role, catalyzes the oxidation of either pyridoxine 5'-phosphate (PNP) or pyridoxamine 5'-phosphate (PMP) into pyridoxal 5'-phosphate (PLP). The sequence is that of Pyridoxine/pyridoxamine 5'-phosphate oxidase from Frankia casuarinae (strain DSM 45818 / CECT 9043 / HFP020203 / CcI3).